Consider the following 91-residue polypeptide: Putative regulatory protein DSY2730 (91 aa).

Belongs to the RemA family.

This chain is Putative regulatory protein DSY2730, found in Desulfitobacterium hafniense (strain Y51).